The following is a 417-amino-acid chain: uncharacterized protein (417 aa).

The helical transmembrane segment at Ala-10 to Pro-30 threads the bilayer. The interval Gln-84–Asn-106 is disordered. The segment covering Asn-86–Asn-106 has biased composition (polar residues). Residues Leu-148–Val-168 form a helical membrane-spanning segment.

Its subcellular location is the cell membrane. This is an uncharacterized protein from Methanocaldococcus jannaschii (strain ATCC 43067 / DSM 2661 / JAL-1 / JCM 10045 / NBRC 100440) (Methanococcus jannaschii).